A 726-amino-acid chain; its full sequence is Probable cyclic nucleotide-gated ion channel 14 (726 aa).

At Met1–Val86 the chain is on the cytoplasmic side. Residues Phe87 to Val107 form a helical membrane-spanning segment. Over Lys108 to Leu122 the chain is Extracellular. The helical transmembrane segment at Gly123–Ile143 threads the bilayer. Topologically, residues Lys144–Asp177 are cytoplasmic. The chain crosses the membrane as a helical span at residues Phe178 to Pro198. At Ser199–Ala211 the chain is on the extracellular side. A helical transmembrane segment spans residues Leu212 to Ala232. The Cytoplasmic segment spans residues Glu233–Asn252. The chain crosses the membrane as a helical span at residues Leu253 to Glu273. Topologically, residues Arg274 to Thr377 are extracellular. Residues Met378–Met398 form a helical membrane-spanning segment. At Gln399–Asp726 the chain is on the cytoplasmic side. Residues Leu481–Leu605 and Glu552 contribute to the a nucleoside 3',5'-cyclic phosphate site. Residues Phe597–Tyr612 form a calmodulin-binding region. In terms of domain architecture, IQ spans Arg617–Phe646. Residues Lys707 to Asp726 are disordered.

The protein belongs to the cyclic nucleotide-gated cation channel (TC 1.A.1.5) family. Homotetramer or heterotetramer.

It localises to the cell membrane. Its function is as follows. Probable cyclic nucleotide-gated ion channel. This Arabidopsis thaliana (Mouse-ear cress) protein is Probable cyclic nucleotide-gated ion channel 14 (CNGC14).